Reading from the N-terminus, the 146-residue chain is Hemoglobin subunit beta (146 aa).

Residue Val-1 is modified to N-acetylvaline. Residues 2–146 form the Globin domain; that stretch reads HLTGEEKSAV…VANALAHKYH (145 aa). Thr-12 carries the phosphothreonine modification. Position 44 is a phosphoserine (Ser-44). An N6-acetyllysine modification is found at Lys-59. Residue His-63 participates in heme b binding. Lys-82 is subject to N6-acetyllysine. His-92 provides a ligand contact to heme b. An S-nitrosocysteine modification is found at Cys-93. N6-acetyllysine is present on Lys-144.

This sequence belongs to the globin family. Heterotetramer of two alpha chains and two beta chains. In terms of tissue distribution, red blood cells.

Its function is as follows. Involved in oxygen transport from the lung to the various peripheral tissues. This chain is Hemoglobin subunit beta (HBB), found in Phoca vitulina (Harbor seal).